The chain runs to 214 residues: Outer-membrane lipoprotein LolB (214 aa).

Residues 1-30 (MKHVSSPHPCAAIASARVWLGLVLVALLAG) form the signal peptide. Cysteine 31 is lipidated: N-palmitoyl cysteine. Cysteine 31 carries S-diacylglycerol cysteine lipidation.

It belongs to the LolB family. In terms of assembly, monomer.

It is found in the cell outer membrane. Its function is as follows. Plays a critical role in the incorporation of lipoproteins in the outer membrane after they are released by the LolA protein. This Chromohalobacter salexigens (strain ATCC BAA-138 / DSM 3043 / CIP 106854 / NCIMB 13768 / 1H11) protein is Outer-membrane lipoprotein LolB.